We begin with the raw amino-acid sequence, 268 residues long: Centromere protein Q (268 aa).

The disordered stretch occupies residues 1 to 80; that stretch reads MSGKANASKK…KTWQPLSKST (80 aa). Phosphoserine is present on residues S31 and S50. Positions 58–72 are enriched in basic residues; it reads TNLKHGKTAASKRKT. Residues 170–206 are a coiled coil; it reads ELMTGNIQSLKNKIQILASEVEEEEERVKQMHQINSS. S249 carries the post-translational modification Phosphoserine.

Belongs to the CENP-Q/OKP1 family. In terms of assembly, component of the CENPA-CAD complex, composed of CENPI, CENPK, CENPL, CENPO, CENPP, CENPQ, CENPR and CENPS. The CENPA-CAD complex interacts with the CENPA-NAC complex, at least composed of CENPA, CENPC, CENPH, CENPM, CENPN, CENPT and CENPU. Post-translationally, phosphorylation at Ser-50 is essential for CENPE recruitment to kinetochores and orderly chromosome congression.

It is found in the nucleus. The protein resides in the chromosome. The protein localises to the centromere. Functionally, component of the CENPA-CAD (nucleosome distal) complex, a complex recruited to centromeres which is involved in assembly of kinetochore proteins, mitotic progression and chromosome segregation. May be involved in incorporation of newly synthesized CENPA into centromeres via its interaction with the CENPA-NAC complex. Plays an important role in chromosome congression and in the recruitment of CENP-O complex (which comprises CENPO, CENPP, CENPQ and CENPU), CENPE and PLK1 to the kinetochores. This Homo sapiens (Human) protein is Centromere protein Q (CENPQ).